The primary structure comprises 140 residues: Large-conductance mechanosensitive channel (140 aa).

The next 2 helical transmembrane spans lie at 21 to 41 (VGVI…GDVI) and 82 to 102 (GSFI…FMMI).

This sequence belongs to the MscL family. In terms of assembly, homopentamer.

It localises to the cell inner membrane. In terms of biological role, channel that opens in response to stretch forces in the membrane lipid bilayer. May participate in the regulation of osmotic pressure changes within the cell. In Leptothrix cholodnii (strain ATCC 51168 / LMG 8142 / SP-6) (Leptothrix discophora (strain SP-6)), this protein is Large-conductance mechanosensitive channel.